The primary structure comprises 448 residues: Exodeoxyribonuclease 7 large subunit (448 aa).

It belongs to the XseA family. Heterooligomer composed of large and small subunits.

It localises to the cytoplasm. It carries out the reaction Exonucleolytic cleavage in either 5'- to 3'- or 3'- to 5'-direction to yield nucleoside 5'-phosphates.. Functionally, bidirectionally degrades single-stranded DNA into large acid-insoluble oligonucleotides, which are then degraded further into small acid-soluble oligonucleotides. The chain is Exodeoxyribonuclease 7 large subunit from Bacillus pumilus (strain SAFR-032).